Reading from the N-terminus, the 559-residue chain is 2-isopropylmalate synthase (559 aa).

The Pyruvate carboxyltransferase domain occupies Pro-33–Asp-307. Mg(2+) contacts are provided by Asp-42, His-246, His-248, and Asn-282. The segment at Ala-439–Ala-559 is regulatory domain.

This sequence belongs to the alpha-IPM synthase/homocitrate synthase family. LeuA type 2 subfamily. Homodimer. The cofactor is Mg(2+).

The protein localises to the cytoplasm. It catalyses the reaction 3-methyl-2-oxobutanoate + acetyl-CoA + H2O = (2S)-2-isopropylmalate + CoA + H(+). Its pathway is amino-acid biosynthesis; L-leucine biosynthesis; L-leucine from 3-methyl-2-oxobutanoate: step 1/4. Catalyzes the condensation of the acetyl group of acetyl-CoA with 3-methyl-2-oxobutanoate (2-ketoisovalerate) to form 3-carboxy-3-hydroxy-4-methylpentanoate (2-isopropylmalate). This chain is 2-isopropylmalate synthase, found in Pseudomonas fluorescens (strain SBW25).